The primary structure comprises 211 residues: tRNA (guanine-N(7)-)-methyltransferase (211 aa).

Glu44, Asp69, Asp96, and Asp118 together coordinate S-adenosyl-L-methionine. Asp118 is a catalytic residue. Position 122 (Lys122) interacts with substrate. An interaction with RNA region spans residues 124–129; the sequence is RHEKRR. Substrate is bound by residues Asp154 and 191–194; that span reads TEYE.

The protein belongs to the class I-like SAM-binding methyltransferase superfamily. TrmB family.

It carries out the reaction guanosine(46) in tRNA + S-adenosyl-L-methionine = N(7)-methylguanosine(46) in tRNA + S-adenosyl-L-homocysteine. It functions in the pathway tRNA modification; N(7)-methylguanine-tRNA biosynthesis. Functionally, catalyzes the formation of N(7)-methylguanine at position 46 (m7G46) in tRNA. In Streptococcus equi subsp. zooepidemicus (strain H70), this protein is tRNA (guanine-N(7)-)-methyltransferase.